A 53-amino-acid polypeptide reads, in one-letter code: ATP synthase protein 8 (53 aa).

Residues 4–24 form a helical membrane-spanning segment; the sequence is MAPISWLLLFIVFSITFILFC.

It belongs to the ATPase protein 8 family. As to quaternary structure, F-type ATPases have 2 components, CF(1) - the catalytic core - and CF(0) - the membrane proton channel.

It is found in the mitochondrion membrane. Mitochondrial membrane ATP synthase (F(1)F(0) ATP synthase or Complex V) produces ATP from ADP in the presence of a proton gradient across the membrane which is generated by electron transport complexes of the respiratory chain. F-type ATPases consist of two structural domains, F(1) - containing the extramembraneous catalytic core and F(0) - containing the membrane proton channel, linked together by a central stalk and a peripheral stalk. During catalysis, ATP synthesis in the catalytic domain of F(1) is coupled via a rotary mechanism of the central stalk subunits to proton translocation. Part of the complex F(0) domain. Minor subunit located with subunit a in the membrane. This Drosophila yakuba (Fruit fly) protein is ATP synthase protein 8 (mt:ATPase8).